The primary structure comprises 339 residues: Putative clathrin assembly protein At1g14686 (339 aa).

The ENTH domain occupies S16 to R148. A disordered region spans residues E283–T307. The span at A295–I305 shows a compositional bias: acidic residues.

The protein resides in the membrane. It is found in the clathrin-coated pit. Its subcellular location is the golgi apparatus. The protein localises to the cytoplasmic vesicle. It localises to the clathrin-coated vesicle. The chain is Putative clathrin assembly protein At1g14686 from Arabidopsis thaliana (Mouse-ear cress).